The sequence spans 428 residues: Histone deacetylase 3 (428 aa).

The interval Lys-3 to Glu-316 is histone deacetylase. Positions 17, 21, and 25 each coordinate 1D-myo-inositol 1,4,5,6-tetrakisphosphate. Residue His-135 is part of the active site. 3 residues coordinate Zn(2+): Asp-170, His-172, and Asp-259. Residue Arg-265 participates in 1D-myo-inositol 1,4,5,6-tetrakisphosphate binding. Basic and acidic residues-rich tracts occupy residues Asp-388–Ser-405 and Asp-415–Ile-428. The segment at Asp-388 to Ile-428 is disordered. The residue at position 424 (Ser-424) is a Phosphoserine.

The protein belongs to the histone deacetylase family. HD type 1 subfamily. In terms of assembly, interacts with HDAC7 and HDAC9. Interacts with DAXX, KDM4A, HDAC10 and DACH1. Found in a complex with NCOR1 and NCOR2. Component of the N-Cor repressor complex, at least composed of NCOR1, NCOR2, HDAC3, TBL1X, TBL1R, CORO2A and GPS2. Interacts with BCOR, MJD2A/JHDM3A, NRIP1, PRDM6 and SRY. Interacts with BTBD14B. Interacts with GLIS2. Interacts (via the DNA-binding domain) with NR2C1; the interaction recruits phosphorylated NR2C1 to PML bodies for sumoylation. Component of the Notch corepressor complex. Interacts with CBFA2T3 and NKAP. Interacts with APEX1; the interaction is not dependent on the acetylated status of APEX1. Interacts with ZMYND15. Interacts with SMRT/NCOR2 and BCL6 on DNA enhancer elements. Interacts with INSM1. Interacts with XBP1 isoform 1; the interaction occurs in endothelial cell (EC) under disturbed flow. Interacts (via C-terminus) with CCAR2 (via N-terminus). Interacts with and deacetylates MEF2D. Interacts with BEND3. Interacts with NKAPL. Interacts with DHX36; this interaction occurs in a RNA-dependent manner. Interacts weakly with CRY1; this interaction is enhanced in the presence of FBXL3. Interacts with FBXL3 and BMAL1. Interacts with NCOR1. Interacts with RARA. Interacts with SETD5. In terms of processing, sumoylated in vitro. Post-translationally, deubiquitinated on 'Lys-63'-linked ubiquitin chains by USP38; leading to a decreased level of histone acetylation.

The protein localises to the nucleus. It localises to the chromosome. It is found in the cytoplasm. Its subcellular location is the cytosol. It carries out the reaction N(6)-acetyl-L-lysyl-[histone] + H2O = L-lysyl-[histone] + acetate. The catalysed reaction is N(6)-acetyl-L-lysyl-[protein] + H2O = L-lysyl-[protein] + acetate. The enzyme catalyses N(6)-(2E)-butenoyl-L-lysyl-[protein] + H2O = (2E)-2-butenoate + L-lysyl-[protein]. It catalyses the reaction N(6)-(2-hydroxyisobutanoyl)-L-lysyl-[protein] + H2O = 2-hydroxy-2-methylpropanoate + L-lysyl-[protein]. It carries out the reaction N(6)-[(S)-lactoyl]-L-lysyl-[protein] + H2O = (S)-lactate + L-lysyl-[protein]. Inositol tetraphosphate (1D-myo-inositol 1,4,5,6-tetrakisphosphate) promotes the histone deacetylase activity by acting as an intermolecular glue between HDAC3 and NCOR2, thereby promoting its association with the N-Cor complex, a prerequisite for the histone deacetylase activity. Functionally, histone deacetylase that catalyzes the deacetylation of lysine residues on the N-terminal part of the core histones (H2A, H2B, H3 and H4), and some other non-histone substrates. Histone deacetylation gives a tag for epigenetic repression and plays an important role in transcriptional regulation, cell cycle progression and developmental events. Histone deacetylases act via the formation of large multiprotein complexes, such as N-Cor repressor complex, which activate the histone deacetylase activity. Participates in the BCL6 transcriptional repressor activity by deacetylating the H3 'Lys-27' (H3K27) on enhancer elements, antagonizing EP300 acetyltransferase activity and repressing proximal gene expression. Acts as a molecular chaperone for shuttling phosphorylated NR2C1 to PML bodies for sumoylation. Contributes, together with XBP1 isoform 1, to the activation of NFE2L2-mediated HMOX1 transcription factor gene expression in a PI(3)K/mTORC2/Akt-dependent signaling pathway leading to endothelial cell (EC) survival under disturbed flow/oxidative stress. Regulates both the transcriptional activation and repression phases of the circadian clock in a deacetylase activity-independent manner. During the activation phase, promotes the accumulation of ubiquitinated BMAL1 at the E-boxes and during the repression phase, blocks FBXL3-mediated CRY1/2 ubiquitination and promotes the interaction of CRY1 and BMAL1. The NCOR1-HDAC3 complex regulates the circadian expression of the core clock gene BMAL1 and the genes involved in lipid metabolism in the liver. Also functions as deacetylase for non-histone targets, such as KAT5, MEF2D, MAPK14, RARA and STAT3. Serves as a corepressor of RARA, mediating its deacetylation and repression, leading to inhibition of RARE DNA element binding. In addition to protein deacetylase activity, also acts as a protein-lysine deacylase by recognizing other acyl groups: catalyzes removal of (2E)-butenoyl (crotonyl), lactoyl (lactyl) and 2-hydroxyisobutanoyl (2-hydroxyisobutyryl) acyl groups from lysine residues, leading to protein decrotonylation, delactylation and de-2-hydroxyisobutyrylation, respectively. Catalyzes decrotonylation of MAPRE1/EB1. Mediates delactylation NBN/NBS1, thereby inhibiting DNA double-strand breaks (DSBs) via homologous recombination (HR). This Mus musculus (Mouse) protein is Histone deacetylase 3.